The chain runs to 123 residues: Large ribosomal subunit protein bL12 (123 aa).

It belongs to the bacterial ribosomal protein bL12 family. As to quaternary structure, homodimer. Part of the ribosomal stalk of the 50S ribosomal subunit. Forms a multimeric L10(L12)X complex, where L10 forms an elongated spine to which 2 to 4 L12 dimers bind in a sequential fashion. Binds GTP-bound translation factors.

Its function is as follows. Forms part of the ribosomal stalk which helps the ribosome interact with GTP-bound translation factors. Is thus essential for accurate translation. In Photorhabdus laumondii subsp. laumondii (strain DSM 15139 / CIP 105565 / TT01) (Photorhabdus luminescens subsp. laumondii), this protein is Large ribosomal subunit protein bL12.